The primary structure comprises 1551 residues: Pentafunctional AROM polypeptide (1551 aa).

A 3-dehydroquinate synthase region spans residues 1–379 (MSIEKVPILG…YQLKAHQVSK (379 aa)). Residues 42-44 (DTN), 80-83 (ENNK), 111-113 (GGV), and D116 each bind NAD(+). R127 contributes to the 7-phospho-2-dehydro-3-deoxy-D-arabino-heptonate binding site. 136 to 137 (TT) contributes to the NAD(+) binding site. Positions 143 and 149 each coordinate 7-phospho-2-dehydro-3-deoxy-D-arabino-heptonate. K158 contacts NAD(+). N159 is a binding site for 7-phospho-2-dehydro-3-deoxy-D-arabino-heptonate. NAD(+) is bound by residues 176–179 (FLET) and N187. E191 provides a ligand contact to Zn(2+). 7-phospho-2-dehydro-3-deoxy-D-arabino-heptonate is bound by residues 191–194 (EVVK) and K243. E253 acts as the Proton acceptor; for 3-dehydroquinate synthase activity in catalysis. 7-phospho-2-dehydro-3-deoxy-D-arabino-heptonate-binding positions include 257–261 (RNLLN) and H264. H264 contacts Zn(2+). H268 serves as the catalytic Proton acceptor; for 3-dehydroquinate synthase activity. 2 residues coordinate 7-phospho-2-dehydro-3-deoxy-D-arabino-heptonate: H280 and K351. Residue H280 participates in Zn(2+) binding. The segment at 392-838 (VHPFTNPPKE…WDILHSKFKI (447 aa)) is EPSP synthase. Positions 858–1048 (DKSIIVIGMR…VPAGRSAAVV (191 aa)) are shikimate kinase. 865-872 (GMRGTGKS) is an ATP binding site. Residues 1049–1258 (LTSPDLNEVV…NDEEFLTIGE (210 aa)) are 3-dehydroquinase. R1194 functions as the Schiff-base intermediate with substrate; for 3-dehydroquinate dehydratase activity in the catalytic mechanism. Residues 1271 to 1551 (AKKFWVIGSP…EIIHRAVVEE (281 aa)) form a shikimate dehydrogenase region.

In the N-terminal section; belongs to the sugar phosphate cyclases superfamily. Dehydroquinate synthase family. The protein in the 2nd section; belongs to the EPSP synthase family. It in the 3rd section; belongs to the shikimate kinase family. This sequence in the 4th section; belongs to the type-I 3-dehydroquinase family. In the C-terminal section; belongs to the shikimate dehydrogenase family. As to quaternary structure, homodimer. Zn(2+) is required as a cofactor.

Its subcellular location is the cytoplasm. It carries out the reaction 7-phospho-2-dehydro-3-deoxy-D-arabino-heptonate = 3-dehydroquinate + phosphate. It catalyses the reaction 3-dehydroquinate = 3-dehydroshikimate + H2O. The enzyme catalyses shikimate + NADP(+) = 3-dehydroshikimate + NADPH + H(+). The catalysed reaction is shikimate + ATP = 3-phosphoshikimate + ADP + H(+). It carries out the reaction 3-phosphoshikimate + phosphoenolpyruvate = 5-O-(1-carboxyvinyl)-3-phosphoshikimate + phosphate. It participates in metabolic intermediate biosynthesis; chorismate biosynthesis; chorismate from D-erythrose 4-phosphate and phosphoenolpyruvate: step 2/7. The protein operates within metabolic intermediate biosynthesis; chorismate biosynthesis; chorismate from D-erythrose 4-phosphate and phosphoenolpyruvate: step 3/7. Its pathway is metabolic intermediate biosynthesis; chorismate biosynthesis; chorismate from D-erythrose 4-phosphate and phosphoenolpyruvate: step 4/7. It functions in the pathway metabolic intermediate biosynthesis; chorismate biosynthesis; chorismate from D-erythrose 4-phosphate and phosphoenolpyruvate: step 5/7. It participates in metabolic intermediate biosynthesis; chorismate biosynthesis; chorismate from D-erythrose 4-phosphate and phosphoenolpyruvate: step 6/7. In terms of biological role, the AROM polypeptide catalyzes 5 consecutive enzymatic reactions in prechorismate polyaromatic amino acid biosynthesis. The chain is Pentafunctional AROM polypeptide from Candida albicans (strain SC5314 / ATCC MYA-2876) (Yeast).